Here is a 671-residue protein sequence, read N- to C-terminus: RNA polymerase sigma factor RpoD (671 aa).

Disordered regions lie at residues 1 to 45 and 229 to 260; these read MKKK…SKIK and DDDE…VSEK. Over residues 251-260 the composition is skewed to basic and acidic residues; sequence EERKKVVSEK. A sigma-70 factor domain-2 region spans residues 436–506; sequence MAKSNLRLVV…SRAIADQART (71 aa). The Interaction with polymerase core subunit RpoC motif lies at 460–463; the sequence is DLIQ. Residues 515-591 form a sigma-70 factor domain-3 region; that stretch reads DTINRINKVM…DKNIVSSIDH (77 aa). Residues 604–658 form a sigma-70 factor domain-4 region; sequence VLDQLNEREKAVIRMRFGLLDDESDRTLEEIGKELNVTRERVRQIESSAIKKLRS. The segment at residues 631–650 is a DNA-binding region (H-T-H motif); sequence LEEIGKELNVTRERVRQIES.

The protein belongs to the sigma-70 factor family. RpoD/SigA subfamily. In terms of assembly, interacts transiently with the RNA polymerase catalytic core.

The protein resides in the cytoplasm. Its function is as follows. Sigma factors are initiation factors that promote the attachment of RNA polymerase to specific initiation sites and are then released. This sigma factor is the primary sigma factor during exponential growth. In Helicobacter pylori (strain ATCC 700392 / 26695) (Campylobacter pylori), this protein is RNA polymerase sigma factor RpoD.